Reading from the N-terminus, the 257-residue chain is Probable ABC transporter arginine-binding protein ArtJ (257 aa).

The N-terminal stretch at 1-23 (MCIKRKKTWIAFLAVVCSFCLTG) is a signal peptide. The L-arginine site is built by Asn41, Glu48, Gly100, Ser102, Arg107, and Tyr151.

It belongs to the bacterial solute-binding protein 3 family.

Its subcellular location is the secreted. It is found in the cell surface. Functionally, probably part of an ABC transporter complex involved in arginine transport. Binds arginine. Interacts with host epithelial cells, suggesting a role in host-cell adhesion during infection. The protein is Probable ABC transporter arginine-binding protein ArtJ of Chlamydia trachomatis serovar D (strain ATCC VR-885 / DSM 19411 / UW-3/Cx).